The sequence spans 572 residues: Cytochrome P450 monooxygenase xilC (572 aa).

C515 is a heme binding site.

This sequence belongs to the cytochrome P450 family. Heme serves as cofactor.

The protein operates within secondary metabolite biosynthesis. In terms of biological role, cytochrome P450 monooxygenase; part of the gene cluster that mediates the biosynthesis of the 6-methyl-2-pyrone derivative xylariolide D. XilC hydroxylates the 5-alkyl-6-methyl-2-pyrone backbone called prexylariolide D, produced by the highly reducing polyketide synthase xilA, on its side chain to form xylariolide D. In Penicillium crustosum (Blue mold fungus), this protein is Cytochrome P450 monooxygenase xilC.